Here is a 125-residue protein sequence, read N- to C-terminus: Short coiled-coil protein (125 aa).

The disordered stretch occupies residues 1 to 31; that stretch reads MSKMDGLSTGEEEDSTFTSISLEDDTDHSLK. Positions 43 to 101 form a coiled coil; the sequence is KMMNADMDAVDAENQVELEEKTRLINQVLELQHTLEDLSARVDAVKEENLKLKSENQVL.

It belongs to the SCOC family. Homodimer. Interacts with ARL1, ARL2 and ARL3. Directly interacts with FEZ1 and UVRAG. The interaction with UVRAG is reduced by amino acid starvation, but the complex is stabilized in the presence of FEZ1. Interacts with NRBF2.

It localises to the golgi apparatus membrane. It is found in the golgi apparatus. The protein resides in the trans-Golgi network. Its subcellular location is the cytoplasm. The protein localises to the cytosol. Functionally, positive regulator of amino acid starvation-induced autophagy. This chain is Short coiled-coil protein (Scoc), found in Mus musculus (Mouse).